An 853-amino-acid polypeptide reads, in one-letter code: DNA mismatch repair protein MutS (853 aa).

616–623 lines the ATP pocket; sequence GPNMGGKS.

The protein belongs to the DNA mismatch repair MutS family.

In terms of biological role, this protein is involved in the repair of mismatches in DNA. It is possible that it carries out the mismatch recognition step. This protein has a weak ATPase activity. In Erwinia tasmaniensis (strain DSM 17950 / CFBP 7177 / CIP 109463 / NCPPB 4357 / Et1/99), this protein is DNA mismatch repair protein MutS.